Consider the following 72-residue polypeptide: MTNEPSTSTPTSTSTSTSTSTSTSTTTLTSTSSTPTSTSTSTSTSTSTSTSTSTSLIYRGTIITITTFITII.

The tract at residues 1–53 (MTNEPSTSTPTSTSTSTSTSTSTSTTTLTSTSSTPTSTSTSTSTSTSTSTSTS) is disordered.

This is an uncharacterized protein from Dictyostelium discoideum (Social amoeba).